Reading from the N-terminus, the 350-residue chain is Ubiquitin carboxyl-terminal hydrolase 11 (350 aa).

The 296-residue stretch at 49 to 344 (KGLYNVSGND…SACLLFYEME (296 aa)) folds into the USP domain. The active-site Nucleophile is the Cys59. His302 serves as the catalytic Proton acceptor.

The protein belongs to the peptidase C19 family.

It carries out the reaction Thiol-dependent hydrolysis of ester, thioester, amide, peptide and isopeptide bonds formed by the C-terminal Gly of ubiquitin (a 76-residue protein attached to proteins as an intracellular targeting signal).. This Schizosaccharomyces pombe (strain 972 / ATCC 24843) (Fission yeast) protein is Ubiquitin carboxyl-terminal hydrolase 11 (ubp11).